Reading from the N-terminus, the 197-residue chain is Surfactant protein C (197 aa).

The propeptide occupies 1 to 23; it reads MDVGSKEVLMESPPDYSAAPRGR. Residues cysteine 28 and cysteine 29 are each lipidated (S-palmitoyl cysteine). Positions 59-197 are excised as a propeptide; the sequence is HMSQKHTEMV…LCGEVPLYYI (139 aa). The region spanning 94–197 is the BRICHOS domain; that stretch reads FSIGSTGLVV…LCGEVPLYYI (104 aa). Intrachain disulfides connect cysteine 120–cysteine 148 and cysteine 121–cysteine 189.

It localises to the secreted. The protein resides in the extracellular space. The protein localises to the surface film. Functionally, pulmonary surfactant associated proteins promote alveolar stability by lowering the surface tension at the air-liquid interface in the peripheral air spaces. This chain is Surfactant protein C, found in Homo sapiens (Human).